A 316-amino-acid polypeptide reads, in one-letter code: Ribosomal RNA small subunit methyltransferase H (316 aa).

Residues 37–39 (GGH), D56, F83, D106, and H113 contribute to the S-adenosyl-L-methionine site. The tract at residues 276-316 (PILPSEEETKENPASRSAKLRVLRKTKSADKKYKKENSKEE) is disordered. The span at 302–316 (KSADKKYKKENSKEE) shows a compositional bias: basic and acidic residues.

Belongs to the methyltransferase superfamily. RsmH family.

Its subcellular location is the cytoplasm. It catalyses the reaction cytidine(1402) in 16S rRNA + S-adenosyl-L-methionine = N(4)-methylcytidine(1402) in 16S rRNA + S-adenosyl-L-homocysteine + H(+). Functionally, specifically methylates the N4 position of cytidine in position 1402 (C1402) of 16S rRNA. This chain is Ribosomal RNA small subunit methyltransferase H, found in Leptospira borgpetersenii serovar Hardjo-bovis (strain JB197).